We begin with the raw amino-acid sequence, 173 residues long: Alkyl hydroperoxide reductase AhpD (173 aa).

Cys-131 (proton donor) is an active-site residue. Cys-131 and Cys-134 form a disulfide bridge. Cys-134 acts as the Cysteine sulfenic acid (-SOH) intermediate in catalysis.

This sequence belongs to the AhpD family.

The enzyme catalyses N(6)-[(R)-dihydrolipoyl]-L-lysyl-[lipoyl-carrier protein] + a hydroperoxide = N(6)-[(R)-lipoyl]-L-lysyl-[lipoyl-carrier protein] + an alcohol + H2O. Its function is as follows. Antioxidant protein with alkyl hydroperoxidase activity. Required for the reduction of the AhpC active site cysteine residues and for the regeneration of the AhpC enzyme activity. In Maricaulis maris (strain MCS10) (Caulobacter maris), this protein is Alkyl hydroperoxide reductase AhpD.